A 155-amino-acid polypeptide reads, in one-letter code: 6,7-dimethyl-8-ribityllumazine synthase (155 aa).

5-amino-6-(D-ribitylamino)uracil is bound by residues Phe24, 58–60, and 82–84; these read AFE and AII. Residue 87–88 participates in (2S)-2-hydroxy-3-oxobutyl phosphate binding; the sequence is AT. Catalysis depends on His90, which acts as the Proton donor. Phe115 provides a ligand contact to 5-amino-6-(D-ribitylamino)uracil. A (2S)-2-hydroxy-3-oxobutyl phosphate-binding site is contributed by Arg129.

The protein belongs to the DMRL synthase family.

The enzyme catalyses (2S)-2-hydroxy-3-oxobutyl phosphate + 5-amino-6-(D-ribitylamino)uracil = 6,7-dimethyl-8-(1-D-ribityl)lumazine + phosphate + 2 H2O + H(+). Its pathway is cofactor biosynthesis; riboflavin biosynthesis; riboflavin from 2-hydroxy-3-oxobutyl phosphate and 5-amino-6-(D-ribitylamino)uracil: step 1/2. Its function is as follows. Catalyzes the formation of 6,7-dimethyl-8-ribityllumazine by condensation of 5-amino-6-(D-ribitylamino)uracil with 3,4-dihydroxy-2-butanone 4-phosphate. This is the penultimate step in the biosynthesis of riboflavin. In Prosthecochloris aestuarii (strain DSM 271 / SK 413), this protein is 6,7-dimethyl-8-ribityllumazine synthase.